The primary structure comprises 336 residues: Aspartate--ammonia ligase (336 aa).

Belongs to the class-II aminoacyl-tRNA synthetase family. AsnA subfamily.

Its subcellular location is the cytoplasm. The catalysed reaction is L-aspartate + NH4(+) + ATP = L-asparagine + AMP + diphosphate + H(+). It participates in amino-acid biosynthesis; L-asparagine biosynthesis; L-asparagine from L-aspartate (ammonia route): step 1/1. This chain is Aspartate--ammonia ligase, found in Clostridium perfringens (strain 13 / Type A).